The chain runs to 167 residues: HTH-type transcriptional repressor IacR (167 aa).

Polar residues predominate over residues 1–10 (MSNAKNTSAA). Residues 1 to 25 (MSNAKNTSAASPARKGHSHHDPASD) are disordered. The region spanning 30–162 (EDFPFYWLAR…LNRMLEVVFH (133 aa)) is the HTH marR-type domain. Residues 76–99 (ISEISTHAIAKLSTITKIVYRMKE) constitute a DNA-binding region (H-T-H motif).

With respect to regulation, exposure to indole-3-acetic acid (IAA) probably relieves the repressor activity. Functionally, probably acts as a repressor of iacA expression. The protein is HTH-type transcriptional repressor IacR of Pseudomonas putida (Arthrobacter siderocapsulatus).